The sequence spans 429 residues: U3 small nucleolar RNA-associated protein 18 homolog (429 aa).

WD repeat units lie at residues 117-156 (RYTR…KKDR), 295-336 (TDDG…NSTN), 345-386 (NLVT…TFKN), and 392-428 (GKVT…HFTD).

The protein belongs to the WD repeat UTP18 family.

It localises to the nucleus. The protein localises to the nucleolus. Involved in nucleolar processing of pre-18S ribosomal RNA. The chain is U3 small nucleolar RNA-associated protein 18 homolog from Caenorhabditis elegans.